A 537-amino-acid polypeptide reads, in one-letter code: CTP synthase (537 aa).

Residues 1–268 form an amidoligase domain region; the sequence is MPAKFIFVTG…DSIVVERLKL (268 aa). Residue serine 14 participates in CTP binding. A UTP-binding site is contributed by serine 14. 15 to 20 contacts ATP; the sequence is SLGKGI. Tyrosine 55 contacts L-glutamine. Position 72 (aspartate 72) interacts with ATP. Residues aspartate 72 and glutamate 142 each coordinate Mg(2+). Residues 149 to 151, 189 to 194, and lysine 225 each bind CTP; these read DIE and KTKPTQ. UTP is bound by residues 189-194 and lysine 225; that span reads KTKPTQ. The 242-residue stretch at 293–534 folds into the Glutamine amidotransferase type-1 domain; sequence EIALVGKYVT…IGAACRRAGG (242 aa). Glycine 354 serves as a coordination point for L-glutamine. Cysteine 381 serves as the catalytic Nucleophile; for glutamine hydrolysis. L-glutamine is bound by residues 382 to 385, glutamate 405, and arginine 462; that span reads LGMQ. Residues histidine 507 and glutamate 509 contribute to the active site.

The protein belongs to the CTP synthase family. Homotetramer.

It catalyses the reaction UTP + L-glutamine + ATP + H2O = CTP + L-glutamate + ADP + phosphate + 2 H(+). It carries out the reaction L-glutamine + H2O = L-glutamate + NH4(+). The enzyme catalyses UTP + NH4(+) + ATP = CTP + ADP + phosphate + 2 H(+). The protein operates within pyrimidine metabolism; CTP biosynthesis via de novo pathway; CTP from UDP: step 2/2. Its activity is regulated as follows. Allosterically activated by GTP, when glutamine is the substrate; GTP has no effect on the reaction when ammonia is the substrate. The allosteric effector GTP functions by stabilizing the protein conformation that binds the tetrahedral intermediate(s) formed during glutamine hydrolysis. Inhibited by the product CTP, via allosteric rather than competitive inhibition. In terms of biological role, catalyzes the ATP-dependent amination of UTP to CTP with either L-glutamine or ammonia as the source of nitrogen. Regulates intracellular CTP levels through interactions with the four ribonucleotide triphosphates. The polypeptide is CTP synthase (Moorella thermoacetica (strain ATCC 39073 / JCM 9320)).